The sequence spans 187 residues: MLTTSDFKRGLVIKLDNSPCLILDVHFQSPSARGASTMVKTRYRNLLTGQVLDKTFRSGDKVEEADFERHKGQYLYADGDRGVFMDMETYEQFEMDAESFQVIQPYLLDGTEVVLGLFQERLVSVDPPQVVELTITDTPPVIKNATATAQTKEATLETGLTLQVPPYLEVGEKIKVDTRDCRFISRA.

This sequence belongs to the elongation factor P family.

It localises to the cytoplasm. The protein operates within protein biosynthesis; polypeptide chain elongation. Its function is as follows. Involved in peptide bond synthesis. Stimulates efficient translation and peptide-bond synthesis on native or reconstituted 70S ribosomes in vitro. Probably functions indirectly by altering the affinity of the ribosome for aminoacyl-tRNA, thus increasing their reactivity as acceptors for peptidyl transferase. This chain is Elongation factor P 1, found in Geobacter sulfurreducens (strain ATCC 51573 / DSM 12127 / PCA).